A 134-amino-acid chain; its full sequence is uncharacterized protein (134 aa).

The N-terminal stretch at 1-16 (MAKAVALLLAAIAASA) is a signal peptide.

This is an uncharacterized protein from Oryza sativa subsp. indica (Rice).